The following is a 513-amino-acid chain: ATP synthase subunit alpha 1 (513 aa).

169–176 provides a ligand contact to ATP; sequence GDRQCGKT.

This sequence belongs to the ATPase alpha/beta chains family. F-type ATPases have 2 components, CF(1) - the catalytic core - and CF(0) - the membrane proton channel. CF(1) has five subunits: alpha(3), beta(3), gamma(1), delta(1), epsilon(1). CF(0) has three main subunits: a(1), b(2) and c(9-12). The alpha and beta chains form an alternating ring which encloses part of the gamma chain. CF(1) is attached to CF(0) by a central stalk formed by the gamma and epsilon chains, while a peripheral stalk is formed by the delta and b chains.

It is found in the cell inner membrane. The catalysed reaction is ATP + H2O + 4 H(+)(in) = ADP + phosphate + 5 H(+)(out). Its function is as follows. Produces ATP from ADP in the presence of a proton gradient across the membrane. The alpha chain is a regulatory subunit. The sequence is that of ATP synthase subunit alpha 1 from Burkholderia pseudomallei (strain 1710b).